The chain runs to 220 residues: MINVQAKPAAAASLAAIAIAFLAGCSSTKPVSQDTSPKPATSPAAPVTTAAMADPAADLIGRGCAQYAAQNPTGPGSVAGMAQDPVATAASNNPMLSTLTSALSGKLNPDVNLVDTLNGGEYTVFAPTNAAFDKLPAATIDQLKTDAKLLSSILTYHVIAGQASPSRIDGTHQTLQGADLTVIGARDDLMVNNAGLVCGGVHTANATVYMIDTVLMPPAQ.

The signal sequence occupies residues 1–24 (MINVQAKPAAAASLAAIAIAFLAG). A lipid anchor (N-palmitoyl cysteine) is attached at Cys25. The S-diacylglycerol cysteine moiety is linked to residue Cys25. Residues Thr48 and Thr49 are each glycosylated (O-linked (Man...) threonine). The FAS1 domain maps to 83–215 (QDPVATAASN…ATVYMIDTVL (133 aa)).

In terms of assembly, interacts with host (human) TLR2. O-glycosylated. Contains 0-3 mannose residues attached to residues 48-49 in various configurations; the dominant glycoform is Thr-48(Man)/Thr-49(Man2) with an unusual Man(1-&gt;3)Man linkage, but Thr48(Man3)/Thr49(Man0) through to Thr48(Man0/)Thr49(Man3) are also seen. Post-translationally, when isolated from culture filtrate runs as 25 and 23 kDa proteins; the larger protein is much less abundant, mostly associated with the cell and starts at residue 28, the shorter is more abundant and starts at residue 48.

The protein resides in the cell membrane. It is found in the secreted. Its subcellular location is the cell wall. In terms of biological role, induces expression of human (host) matrix metalloproteinase-9 (MMP9) in a TLR1/TLR2-dependent fashion; the acylated 20 first mature residues (residues 25-40) induce the most expression, but whole recombinant protein (non-acylated and non-glycosylated), and mannosylated but not acylated protein (residues 26-220) also induce expression. In Mycobacterium bovis (strain ATCC BAA-935 / AF2122/97), this protein is Cell surface glycolipoprotein MPB83 (mpb83).